The primary structure comprises 147 residues: Allograft inflammatory factor 1 (147 aa).

Ser2 is subject to N-acetylserine. At Lys11 the chain carries N6-acetyllysine. Ser39 carries the post-translational modification Phosphoserine. The EF-hand 1 domain occupies 45-80 (SKLEAFKTKYMEFDLNGNGDIDIMSLKRMLEKLGVP). Asp58, Asn60, Asn62, Asp64, Glu98, Thr100, and Asp105 together coordinate Ca(2+). One can recognise an EF-hand 2; degenerate domain in the interval 81 to 115 (KTHLELKKLIREVSSGSEETFSYSDFLRMMLGKRS). Residues 127-147 (KNKEHQKPTGPPAKKAISELP) are disordered.

In terms of assembly, homodimer (Potential). Monomer. Interacts with LCP1. As to expression, cardiac allograft, spleen and testis. Expressed by inflammatory cells (macrophages and neutrophils).

The protein resides in the cytoplasm. It is found in the cytoskeleton. The protein localises to the cell projection. Its subcellular location is the ruffle membrane. It localises to the phagocytic cup. Its function is as follows. Actin-binding protein that enhances membrane ruffling and RAC activation. Enhances the actin-bundling activity of LCP1. Binds calcium. Plays a role in RAC signaling and in phagocytosis. May play an role in macrophage activation and function. Promotes the proliferation of vascular smooth muscle cells and of T-lymphocytes. Enhances lymphocyte migration. Plays a role in vascular inflammation. The sequence is that of Allograft inflammatory factor 1 (Aif1) from Rattus norvegicus (Rat).